The primary structure comprises 257 residues: UPF0246 protein BAV2675 (257 aa).

The protein belongs to the UPF0246 family.

In Bordetella avium (strain 197N), this protein is UPF0246 protein BAV2675.